The following is a 483-amino-acid chain: Trigger factor (483 aa).

A PPIase FKBP-type domain is found at T166–P251. Residues G435 to M460 are compositionally biased toward basic and acidic residues. The tract at residues G435–K483 is disordered. The span at A467–K483 shows a compositional bias: low complexity.

The protein belongs to the FKBP-type PPIase family. Tig subfamily.

The protein resides in the cytoplasm. It catalyses the reaction [protein]-peptidylproline (omega=180) = [protein]-peptidylproline (omega=0). In terms of biological role, involved in protein export. Acts as a chaperone by maintaining the newly synthesized protein in an open conformation. Functions as a peptidyl-prolyl cis-trans isomerase. This Mycoplasma mobile (strain ATCC 43663 / 163K / NCTC 11711) (Mesomycoplasma mobile) protein is Trigger factor.